Reading from the N-terminus, the 659-residue chain is PAN2-PAN3 deadenylation complex subunit PAN3 (659 aa).

2 disordered regions span residues 1–26 (MASA…AREN) and 103–132 (PKAA…QENI). Residues 26-55 (NAKDTLCRNVTIYGRCRYEDKGCAFNHDPL) form a C3H1-type zinc finger. Positions 115-132 (SVASRSNTSTPNSRQENI) are enriched in polar residues. A pseudokinase domain region spans residues 262 to 522 (QTLPNTQLPA…NIDIFITGIS (261 aa)). ATP-binding positions include R314, 363–370 (DYYPLSKT), and 422–423 (SK). Residues 523–561 (SQLMSTFDSALHLDDQLTSDLSRELENGRLVRLMTKLNL) are a coiled coil. Residues 562-659 (VNERPEYEHD…ALLKPARRMH (98 aa)) form a knob domain region.

Belongs to the protein kinase superfamily. PAN3 family. As to quaternary structure, homodimer. Forms a heterotrimer with a catalytic subunit pan2 to form the poly(A)-nuclease (PAN) deadenylation complex. Interacts (via PAM-2 motif) with poly(A)-binding protein pab1 (via PABC domain), conferring substrate specificity of the enzyme complex.

It localises to the cytoplasm. In terms of biological role, regulatory subunit of the poly(A)-nuclease (PAN) deadenylation complex, one of two cytoplasmic mRNA deadenylases involved in mRNA turnover. PAN specifically shortens poly(A) tails of RNA and the activity is stimulated by poly(A)-binding protein pab1. PAN deadenylation is followed by rapid degradation of the shortened mRNA tails by the CCR4-NOT complex. Deadenylated mRNAs are then degraded by two alternative mechanisms, namely exosome-mediated 3'-5' exonucleolytic degradation, or deadenylation-dependent mRNA decaping and subsequent 5'-3' exonucleolytic degradation by xrn1. May also be involved in post-transcriptional maturation of mRNA poly(A) tails. pan3 acts as a positive regulator for PAN activity, recruiting the catalytic subunit pan2 to mRNA via its interaction with RNA and with pab1. The protein is PAN2-PAN3 deadenylation complex subunit PAN3 of Aspergillus clavatus (strain ATCC 1007 / CBS 513.65 / DSM 816 / NCTC 3887 / NRRL 1 / QM 1276 / 107).